A 114-amino-acid polypeptide reads, in one-letter code: Hemerythrin (114 aa).

Fe cation is bound by residues histidine 26, histidine 55, glutamate 59, histidine 74, histidine 78, histidine 102, and aspartate 107.

The protein belongs to the hemerythrin family. As to quaternary structure, homooctamer.

In terms of biological role, hemerythrin is a respiratory protein in blood cells of certain marine worms. The oxygen-binding site in each chain contains two iron atoms. The sequence is that of Hemerythrin from Phascolopsis gouldii (Peanut worm).